The following is a 597-amino-acid chain: Alpha-1,2-mannosyltransferase MNN2 (597 aa).

Residues 1–6 are Cytoplasmic-facing; the sequence is MIAKQK. A helical transmembrane segment spans residues 7–27; it reads IKILIGVIIVIATYHFIVSSN. The Extracellular segment spans residues 28-597; that stretch reads VRSKDLSDLV…ETAEIPTVVS (570 aa). A disordered region spans residues 39–89; that stretch reads LGSSDKSTTENERPKNNIVTNNRLDNPPNEDIPHAEPDSPPQEPPKSGNKP. N-linked (GlcNAc...) asparagine glycosylation is present at Asn-382.

Belongs to the MNN1/MNT family. It depends on Mn(2+) as a cofactor.

The protein resides in the golgi apparatus membrane. The protein operates within protein modification; protein glycosylation. Its activity is regulated as follows. Enzyme activity is regulated by iron. In terms of biological role, alpha-1,2-mannosyltransferase required for cell wall integrity. Responsible for addition of the first alpha-1,2-linked mannose to form the branches on the mannan backbone of oligosaccharides. Addition of alpha-1,2-mannose is required for stabilization of the alpha-1,6-mannose backbone and hence regulates mannan fibril length; and is important for both immune recognition and virulence. Promotes iron uptake and usage along the endocytosis pathway under iron-limiting conditions. This chain is Alpha-1,2-mannosyltransferase MNN2 (MNN2), found in Candida albicans (strain SC5314 / ATCC MYA-2876) (Yeast).